The chain runs to 152 residues: MSEKVVATNKKAFHDYAILEKYEAGIVLTGSEVKSLREGACNLKDSFVMIEDGEAWLYNCYIAPYKPAAKFGHDPTRKRKLLLHKKEILKLMGKVKEKGLTIVPLRVYFKNGKAKVEIALAKGKVKYEKREAMKEKDMKREIEKSFKGKIKL.

It belongs to the SmpB family.

Its subcellular location is the cytoplasm. In terms of biological role, required for rescue of stalled ribosomes mediated by trans-translation. Binds to transfer-messenger RNA (tmRNA), required for stable association of tmRNA with ribosomes. tmRNA and SmpB together mimic tRNA shape, replacing the anticodon stem-loop with SmpB. tmRNA is encoded by the ssrA gene; the 2 termini fold to resemble tRNA(Ala) and it encodes a 'tag peptide', a short internal open reading frame. During trans-translation Ala-aminoacylated tmRNA acts like a tRNA, entering the A-site of stalled ribosomes, displacing the stalled mRNA. The ribosome then switches to translate the ORF on the tmRNA; the nascent peptide is terminated with the 'tag peptide' encoded by the tmRNA and targeted for degradation. The ribosome is freed to recommence translation, which seems to be the essential function of trans-translation. The protein is SsrA-binding protein of Sulfurihydrogenibium sp. (strain YO3AOP1).